We begin with the raw amino-acid sequence, 79 residues long: RNA-binding protein Hfq (79 aa).

The Sm domain maps to 10–70; sequence DAFLNHVRKT…ISTIMPAQPI (61 aa).

This sequence belongs to the Hfq family. As to quaternary structure, homohexamer.

Its function is as follows. RNA chaperone that binds small regulatory RNA (sRNAs) and mRNAs to facilitate mRNA translational regulation in response to envelope stress, environmental stress and changes in metabolite concentrations. Also binds with high specificity to tRNAs. The protein is RNA-binding protein Hfq of Ruegeria sp. (strain TM1040) (Silicibacter sp.).